We begin with the raw amino-acid sequence, 200 residues long: Nucleoside triphosphate pyrophosphatase (200 aa).

The active-site Proton acceptor is aspartate 79.

The protein belongs to the Maf family. Requires a divalent metal cation as cofactor.

The protein localises to the cytoplasm. It carries out the reaction a ribonucleoside 5'-triphosphate + H2O = a ribonucleoside 5'-phosphate + diphosphate + H(+). The catalysed reaction is a 2'-deoxyribonucleoside 5'-triphosphate + H2O = a 2'-deoxyribonucleoside 5'-phosphate + diphosphate + H(+). Its function is as follows. Nucleoside triphosphate pyrophosphatase. May have a dual role in cell division arrest and in preventing the incorporation of modified nucleotides into cellular nucleic acids. This Legionella pneumophila subsp. pneumophila (strain Philadelphia 1 / ATCC 33152 / DSM 7513) protein is Nucleoside triphosphate pyrophosphatase.